Reading from the N-terminus, the 331-residue chain is DNA-directed RNA polymerase subunit alpha (331 aa).

Residues 1–226 (MLIAQRPTLT…ELFGLARELN (226 aa)) form an alpha N-terminal domain (alpha-NTD) region. The tract at residues 243–331 (LSSELSMPIE…SYDEDETTTN (89 aa)) is alpha C-terminal domain (alpha-CTD).

This sequence belongs to the RNA polymerase alpha chain family. As to quaternary structure, homodimer. The RNAP catalytic core consists of 2 alpha, 1 beta, 1 beta' and 1 omega subunit. When a sigma factor is associated with the core the holoenzyme is formed, which can initiate transcription.

It catalyses the reaction RNA(n) + a ribonucleoside 5'-triphosphate = RNA(n+1) + diphosphate. Its function is as follows. DNA-dependent RNA polymerase catalyzes the transcription of DNA into RNA using the four ribonucleoside triphosphates as substrates. The polypeptide is DNA-directed RNA polymerase subunit alpha (Clavibacter michiganensis subsp. michiganensis (strain NCPPB 382)).